Reading from the N-terminus, the 311-residue chain is Ribosomal protein L11 methyltransferase (311 aa).

S-adenosyl-L-methionine is bound by residues Thr-162, Gly-183, Asp-205, and Asn-248.

This sequence belongs to the methyltransferase superfamily. PrmA family.

It is found in the cytoplasm. It catalyses the reaction L-lysyl-[protein] + 3 S-adenosyl-L-methionine = N(6),N(6),N(6)-trimethyl-L-lysyl-[protein] + 3 S-adenosyl-L-homocysteine + 3 H(+). In terms of biological role, methylates ribosomal protein L11. The protein is Ribosomal protein L11 methyltransferase of Bacillus pumilus (strain SAFR-032).